The primary structure comprises 268 residues: Oxygen-evolving enhancer protein 2-1, chloroplastic (268 aa).

The transit peptide at 1–82 (MASTQCFLHQ…IGSKVSPADA (82 aa)) directs the protein to the chloroplast.

Belongs to the PsbP family.

It is found in the plastid. The protein resides in the chloroplast thylakoid membrane. Its function is as follows. May be involved in the regulation of photosystem II. The polypeptide is Oxygen-evolving enhancer protein 2-1, chloroplastic (PSBP1) (Nicotiana tabacum (Common tobacco)).